A 668-amino-acid polypeptide reads, in one-letter code: Packaging protein UL32 homolog (668 aa).

Polar residues predominate over residues 1–10; that stretch reads MNPSTHVSSN. The tract at residues 1-35 is disordered; that stretch reads MNPSTHVSSNGPTTPPHGPHTTFLPPTSPAPSTSS. Low complexity predominate over residues 19 to 35; it reads PHTTFLPPTSPAPSTSS. Zn(2+)-binding residues include C200, C203, H276, and C282. The interval 200 to 282 is zinc finger 1; it reads CNLCAIISIC…FHLHFFINRC (83 aa). Basic and acidic residues-rich tracts occupy residues 392 to 401 and 410 to 419; these read SEREDARMMM and GEKGGDDPGR. A disordered region spans residues 392-430; it reads SEREDARMMMEEEEDEEGGEKGGDDPGRHNGGGTSGGFS. Positions 459, 462, 567, and 574 each coordinate Zn(2+). The tract at residues 459–574 is zinc finger 2; the sequence is CLLCELMACS…YKHFFCDPQC (116 aa).

The protein belongs to the herpesviridae UL32 protein family.

It localises to the host cytoplasm. It is found in the host nucleus. Functionally, plays a role in efficient localization of neo-synthesized capsids to nuclear replication compartments, thereby controlling cleavage and packaging of virus genomic DNA. In Homo sapiens (Human), this protein is Packaging protein UL32 homolog (UL52).